The sequence spans 223 residues: Pleckstrin homology domain-containing family B member 1 (223 aa).

A PH domain is found at 2–109 (ALVRGGWLWR…WKTALMEANS (108 aa)).

In terms of assembly, homodimer. Interacts (via PH domain) with MYO1C. Interacts (via PH domain) with MYO7A. Binds transducins. Highly expressed in photoreceptor cells, oligodendrocytes and throughout the myelinated parts of the central nervous system. Detected in brain, liver, kidney, spleen and trachea.

It localises to the membrane. Its subcellular location is the cytoplasm. The chain is Pleckstrin homology domain-containing family B member 1 (Plekhb1) from Rattus norvegicus (Rat).